Reading from the N-terminus, the 140-residue chain is Nucleoside diphosphate kinase (140 aa).

Positions 11, 59, 87, 93, 104, and 114 each coordinate ATP. The active-site Pros-phosphohistidine intermediate is the H117.

It belongs to the NDK family. As to quaternary structure, homotetramer. Mg(2+) is required as a cofactor.

The protein resides in the cytoplasm. The enzyme catalyses a 2'-deoxyribonucleoside 5'-diphosphate + ATP = a 2'-deoxyribonucleoside 5'-triphosphate + ADP. It carries out the reaction a ribonucleoside 5'-diphosphate + ATP = a ribonucleoside 5'-triphosphate + ADP. Functionally, major role in the synthesis of nucleoside triphosphates other than ATP. The ATP gamma phosphate is transferred to the NDP beta phosphate via a ping-pong mechanism, using a phosphorylated active-site intermediate. This is Nucleoside diphosphate kinase from Rhizobium rhizogenes (strain K84 / ATCC BAA-868) (Agrobacterium radiobacter).